The primary structure comprises 557 residues: Organic cation/carnitine transporter 2 (557 aa).

Topologically, residues 1 to 20 (MRDYDEVTAFLGEWGPFQRL) are cytoplasmic. A helical membrane pass occupies residues 21–41 (IFFLLSASIIPNGFTGLSSVF). The Extracellular segment spans residues 42-142 (LIATPEHRCR…NLVCEDDWKA (101 aa)). N57, N64, and N91 each carry an N-linked (GlcNAc...) asparagine glycan. A helical transmembrane segment spans residues 143-163 (PLTISLFFVGVLLGSFISGQL). Over 164–172 (SDRFGRKNV) the chain is Cytoplasmic. A helical membrane pass occupies residues 173 to 193 (LFVTMGMQTGFSFLQIFSKNF). Over 194–197 (EMFV) the chain is Extracellular. A helical transmembrane segment spans residues 198–218 (VLFVLVGMGQISNYVAAFVLG). 218-225 (GTEILGKS) is a binding site for ATP. Over 219-232 (TEILGKSVRIIFST) the chain is Cytoplasmic. Residues 233–253 (LGVCIFYAFGYMVLPLFAYFI) form a helical membrane-spanning segment. Topologically, residues 254–257 (RDWR) are extracellular. A helical membrane pass occupies residues 258–278 (MLLVALTMPGVLCVALWWFIP). At 279-341 (ESPRWLISQG…LDLLRTWNIR (63 aa)) the chain is on the cytoplasmic side. The helical transmembrane segment at 342–362 (MVTIMSIMLWMTISVGYFGLS) threads the bilayer. The Extracellular segment spans residues 363–373 (LDTPNLHGDIF). A helical membrane pass occupies residues 374-394 (VNCFLSAMVEVPAYVLAWLLL). Residues 395-406 (QYLPRRYSMATA) are Cytoplasmic-facing. A helical membrane pass occupies residues 407–427 (LFLGGSVLLFMQLVPPDLYYL). The Extracellular portion of the chain corresponds to 428 to 430 (ATV). The chain crosses the membrane as a helical span at residues 431–451 (LVMVGKFGVTAAFSMVYVYTA). Residues 452–462 (ELYPTVVRNMG) are Cytoplasmic-facing. The chain crosses the membrane as a helical span at residues 463–483 (VGVSSTASRLGSILSPYFVYL). The Extracellular portion of the chain corresponds to 484-488 (GAYDR). The residue at position 486 (Y486) is a Phosphotyrosine. The helical transmembrane segment at 489–509 (FLPYILMGSLTILTAILTLFL) threads the bilayer. The disordered stretch occupies residues 535–557 (TPSHTRMLKDGQERPTILKSTAF). At T550 the chain carries Phosphothreonine.

It belongs to the major facilitator (TC 2.A.1) superfamily. Organic cation transporter (TC 2.A.1.19) family. In terms of assembly, interacts with PDZK1. Glycosylated. Glycosylation affects the expression levels. In terms of processing, not glycosylated. As to expression, strongly expressed in kidney, skeletal muscle, heart and placenta. Primarily expressed by surface epithelial cells of the colon (at protein level). Expressed in CD68 macrophage and CD43 T-cells but not in CD20 B-cells. In testis, localized to Sertoli cell basal membranes, peritubular myoid cells and Leydig cells.

Its subcellular location is the cell membrane. It localises to the apical cell membrane. The protein localises to the basal cell membrane. The protein resides in the endoplasmic reticulum. It carries out the reaction (R)-carnitine(out) + Na(+)(out) = (R)-carnitine(in) + Na(+)(in). The enzyme catalyses glycine betaine(out) + Na(+)(out) = glycine betaine(in) + Na(+)(in). The catalysed reaction is glycine betaine(out) + (R)-carnitine(in) = glycine betaine(in) + (R)-carnitine(out). It catalyses the reaction O-butanoyl-(R)-carnitine(out) + Na(+)(out) = O-butanoyl-(R)-carnitine(in) + Na(+)(in). It carries out the reaction O-acetyl-(R)-carnitine(out) + Na(+)(out) = O-acetyl-(R)-carnitine(in) + Na(+)(in). The enzyme catalyses O-propanoyl-(R)-carnitine(out) + Na(+)(out) = O-propanoyl-(R)-carnitine(in) + Na(+)(in). The catalysed reaction is (S)-carnitine(out) + Na(+)(out) = (S)-carnitine(in) + Na(+)(in). It catalyses the reaction an O-acyl-(R)-carnitine(out) + Na(+)(out) = an O-acyl-(R)-carnitine(in) + Na(+)(in). It carries out the reaction L-glutamyl-L-arginyl-glycyl-L-methionyl-L-threonine(out) + Na(+)(out) = L-glutamyl-L-arginyl-glycyl-L-methionyl-L-threonine(in) + Na(+)(in). The enzyme catalyses N,N-dimethylglycine(out) + Na(+)(out) = N,N-dimethylglycine(in) + Na(+)(in). Its activity is regulated as follows. Inhibited by emetine, quinidine and verapamil. The IC(50) of emetine is 4.2 uM. Not inhibited by valproic acid. Transport of (R)-carnitine is stimulated by cholesterol in the plasma membrane. Functionally, sodium-ion dependent, high affinity carnitine transporter. Involved in the active cellular uptake of carnitine. Transports one sodium ion with one molecule of carnitine. Also transports organic cations such as tetraethylammonium (TEA) without the involvement of sodium. Relative uptake activity ratio of carnitine to TEA is 11.3. In intestinal epithelia, transports the quorum-sensing pentapeptide CSF (competence and sporulation factor) from B.subtilis which induces cytoprotective heat shock proteins contributing to intestinal homeostasis. May also contribute to regulate the transport of organic compounds in testis across the blood-testis-barrier. Its function is as follows. Retained in the ER, unable to perform carnitine uptake. This Homo sapiens (Human) protein is Organic cation/carnitine transporter 2.